The sequence spans 173 residues: MFIDKIKAKANNYEINVIIEIPMNSGPIKYEFDKESGAIFVDRFMQTTMSYPCNYGFIPHTLSNDGDPVDVLVVAHHPVVPGSVIKCRAVGVLMMEDESGLDEKIIAVPTSKLDITFDHIKELDDLCDMLKQRIVHFFEHYKDLEKGKWVKVTGWENKSKADALINEGIDRVS.

Lysine 29, arginine 43, and tyrosine 55 together coordinate substrate. Residues aspartate 65, aspartate 70, and aspartate 102 each contribute to the Mg(2+) site. Tyrosine 141 contributes to the substrate binding site.

It belongs to the PPase family. In terms of assembly, homohexamer. The cofactor is Mg(2+).

It is found in the cytoplasm. It carries out the reaction diphosphate + H2O = 2 phosphate + H(+). Functionally, catalyzes the hydrolysis of inorganic pyrophosphate (PPi) forming two phosphate ions. The polypeptide is Inorganic pyrophosphatase (Rickettsia conorii (strain ATCC VR-613 / Malish 7)).